The primary structure comprises 1111 residues: Histone deacetylase 5 (1111 aa).

A Glycyl lysine isopeptide (Lys-Gly) (interchain with G-Cter in SUMO2) cross-link involves residue lysine 35. Disordered stretches follow at residues 40-63 (GAMP…RGAL), 107-136 (RQHE…EQQR), and 187-272 (KEPT…SSPL). The segment covering 238 to 249 (DSRDDFPLRKTA) has biased composition (basic and acidic residues). A Phosphoserine; by AMPK, CaMK1, SIK1 and PKD/PRKD1 modification is found at serine 250. The span at 263–272 (KVAERRSSPL) shows a compositional bias: basic and acidic residues. Residue threonine 283 is modified to Phosphothreonine; by PKC. The disordered stretch occupies residues 474–495 (TVGKLPRHRPLSRTQSSPLPQS). The segment covering 485-495 (SRTQSSPLPQS) has biased composition (low complexity). Residue serine 489 is modified to Phosphoserine; by AMPK, CaMK1, SIK1 and PKD/PRKD1. Lysine 524 is modified (N6-acetyllysine). Disordered stretches follow at residues 527–611 (TKTG…LEES) and 645–666 (LGRT…DQPT). The span at 572 to 610 (STQEDLEEEEDEEEEDEDCIQVKDEEGESGPDEGPDLEE) shows a compositional bias: acidic residues. Phosphoserine occurs at positions 600 and 650. Residues 671–1017 (TTGVVYDTFM…VSALLSVELQ (347 aa)) are histone deacetylase. Zn(2+) contacts are provided by cysteine 685, cysteine 687, histidine 693, and cysteine 770. Histidine 822 is a catalytic residue. The Nuclear export signal signature appears at 1070-1109 (EEAETVSAMALLSVGAEQAQAVATQEHSPRPAEEPMEQEP). The interval 1086–1111 (EQAQAVATQEHSPRPAEEPMEQEPTL) is disordered. Serine 1097 is subject to Phosphoserine.

This sequence belongs to the histone deacetylase family. HD type 2 subfamily. As to quaternary structure, interacts with AHRR, BAHD1, BCOR, HDAC7, HDAC9, CTBP1, MEF2C, NCOR2, NRIP1, PHB2 and a 14-3-3 chaperone protein. Interacts with BCL6, DDIT3/CHOP, GRK5, KDM5B and MYOCD. Interacts with EP300 in the presence of TFAP2C. Interacts with ANKRA2. Interacts with CUL7 (as part of the 3M complex); negatively regulated by ANKRA2. Interacts with ZBTB7B; the interaction allows the recruitment of HDAC4 on CD8 loci for deacetylation and possible inhibition of CD8 genes expression. Interacts with RARA. Phosphorylated by AMPK, CaMK1, SIK1 and PRKD1 at Ser-250 and Ser-489. The phosphorylation is required for the export to the cytoplasm and inhibition. Phosphorylated by the PKC kinases PKN1 and PKN2, impairing nuclear import. Phosphorylated by GRK5, leading to nuclear export of HDAC5 and allowing MEF2-mediated transcription. Post-translationally, ubiquitinated. Polyubiquitination however does not lead to its degradation.

The protein resides in the nucleus. It localises to the cytoplasm. The enzyme catalyses N(6)-acetyl-L-lysyl-[histone] + H2O = L-lysyl-[histone] + acetate. Functionally, responsible for the deacetylation of lysine residues on the N-terminal part of the core histones (H2A, H2B, H3 and H4). Histone deacetylation gives a tag for epigenetic repression and plays an important role in transcriptional regulation, cell cycle progression and developmental events. Histone deacetylases act via the formation of large multiprotein complexes. Involved in muscle maturation by repressing transcription of myocyte enhancer MEF2C. During muscle differentiation, it shuttles into the cytoplasm, allowing the expression of myocyte enhancer factors. Serves as a corepressor of RARA and causes its deacetylation. In association with RARA, plays a role in the repression of microRNA-10a and thereby in the inflammatory response. The chain is Histone deacetylase 5 (HDAC5) from Cricetulus griseus (Chinese hamster).